Consider the following 147-residue polypeptide: uncharacterized protein (147 aa).

The protein to M.jannaschii MJ0215.

This is an uncharacterized protein from Methanocaldococcus jannaschii (strain ATCC 43067 / DSM 2661 / JAL-1 / JCM 10045 / NBRC 100440) (Methanococcus jannaschii).